A 233-amino-acid chain; its full sequence is MEPGVAARVAAVADPVLQGMGYRLVRIRISGESGCTVQVMAERPDGTMQIEDCEAVSRALSPVLDIADPIDRAYRLEISSPGIDRPLVRRSDFERHVGHLVKIEMAVAYQNRKRFRGIIKGVEGDGVRITRDDVAKDADPDVVLPMADIGDAKMVLTDELIAESMRRGKAAEREKKRDLGLAPPLAPHAKPAAQAKPKPKAKDGKPAKKPLPTDTKKHRLAADRARRGEIDPD.

Residues 167 to 179 (RGKAAEREKKRDL) show a composition bias toward basic and acidic residues. The disordered stretch occupies residues 167–233 (RGKAAEREKK…RARRGEIDPD (67 aa)). Low complexity predominate over residues 187-196 (PHAKPAAQAK). Basic and acidic residues predominate over residues 220–233 (LAADRARRGEIDPD).

This sequence belongs to the RimP family.

The protein localises to the cytoplasm. Functionally, required for maturation of 30S ribosomal subunits. This is Ribosome maturation factor RimP from Bradyrhizobium sp. (strain ORS 278).